The following is a 926-amino-acid chain: Isoleucine--tRNA ligase (926 aa).

The disordered stretch occupies residues Met-1–Pro-21. A 'HIGH' region motif is present at residues Pro-57–His-67. Glu-552 contributes to the L-isoleucyl-5'-AMP binding site. The 'KMSKS' region motif lies at Lys-593–Ser-597. Lys-596 is a binding site for ATP. The Zn(2+) site is built by Cys-886, Cys-889, Cys-906, and Cys-909.

It belongs to the class-I aminoacyl-tRNA synthetase family. IleS type 1 subfamily. Monomer. Zn(2+) is required as a cofactor.

The protein resides in the cytoplasm. The catalysed reaction is tRNA(Ile) + L-isoleucine + ATP = L-isoleucyl-tRNA(Ile) + AMP + diphosphate. Its function is as follows. Catalyzes the attachment of isoleucine to tRNA(Ile). As IleRS can inadvertently accommodate and process structurally similar amino acids such as valine, to avoid such errors it has two additional distinct tRNA(Ile)-dependent editing activities. One activity is designated as 'pretransfer' editing and involves the hydrolysis of activated Val-AMP. The other activity is designated 'posttransfer' editing and involves deacylation of mischarged Val-tRNA(Ile). This chain is Isoleucine--tRNA ligase, found in Enterococcus faecalis (strain ATCC 700802 / V583).